We begin with the raw amino-acid sequence, 641 residues long: XK-related protein 6 (641 aa).

2 disordered regions span residues 20–47 (LDEAVGSGGEEDGEPGGGGCGGGGDGSE) and 84–120 (RSAAADGGDQPLQPPAAPGAGRQPPTPSAARPEPPPP). Over residues 34–46 (PGGGGCGGGGDGS) the composition is skewed to gly residues. The segment covering 107-120 (PPTPSAARPEPPPP) has biased composition (pro residues). 7 consecutive transmembrane segments (helical) span residues 130-150 (LWIVLALLVFFGDVGTDLWLA), 159-179 (YVYFGLTLFFVLVPSLLVQSL), 318-338 (TLPCVSSVTSLMSLAWVLASY), 372-392 (VISFALFASIFQLYFGIFVVV), 413-433 (WEEILFNMVVGIVYIFCWFNV), 442-462 (MFAYYTIVLTENAALTFLWYF), and 473-493 (AVPALCCVFISFVAGIAMMLL).

This sequence belongs to the XK family.

Its subcellular location is the cell membrane. The sequence is that of XK-related protein 6 from Homo sapiens (Human).